The sequence spans 432 residues: Probable pectate lyase 22 (432 aa).

A signal peptide spans 1 to 45; the sequence is MFRPNSLLIPSNLSTTKSQRNTMLNSSYLSFALIFFCCILFSALA. An N-linked (GlcNAc...) asparagine glycan is attached at N65. Positions 228, 252, and 256 each coordinate Ca(2+). The active site involves R308.

This sequence belongs to the polysaccharide lyase 1 family. Ca(2+) serves as cofactor.

The enzyme catalyses Eliminative cleavage of (1-&gt;4)-alpha-D-galacturonan to give oligosaccharides with 4-deoxy-alpha-D-galact-4-enuronosyl groups at their non-reducing ends.. The protein operates within glycan metabolism; pectin degradation; 2-dehydro-3-deoxy-D-gluconate from pectin: step 2/5. The sequence is that of Probable pectate lyase 22 from Arabidopsis thaliana (Mouse-ear cress).